The sequence spans 199 residues: Probable chemoreceptor glutamine deamidase CheD (199 aa).

The protein belongs to the CheD family.

The enzyme catalyses L-glutaminyl-[protein] + H2O = L-glutamyl-[protein] + NH4(+). In terms of biological role, probably deamidates glutamine residues to glutamate on methyl-accepting chemotaxis receptors (MCPs), playing an important role in chemotaxis. In Cereibacter sphaeroides (Rhodobacter sphaeroides), this protein is Probable chemoreceptor glutamine deamidase CheD.